The chain runs to 356 residues: Competence protein ComGA (356 aa).

144–151 (GPTGSGKT) is an ATP binding site.

The protein belongs to the GSP E family.

The protein localises to the cell membrane. Functionally, required for uptake of DNA by competent cells. This chain is Competence protein ComGA (comGA), found in Bacillus subtilis (strain 168).